The chain runs to 253 residues: Triosephosphate isomerase, cytosolic (253 aa).

Positions 10 and 12 each coordinate substrate. His-96 functions as the Electrophile in the catalytic mechanism. The active-site Proton acceptor is the Glu-166.

The protein belongs to the triosephosphate isomerase family. As to quaternary structure, homodimer.

It localises to the cytoplasm. It carries out the reaction D-glyceraldehyde 3-phosphate = dihydroxyacetone phosphate. It participates in carbohydrate biosynthesis; gluconeogenesis. It functions in the pathway carbohydrate degradation; glycolysis; D-glyceraldehyde 3-phosphate from glycerone phosphate: step 1/1. The sequence is that of Triosephosphate isomerase, cytosolic (TPI) from Oryza sativa subsp. japonica (Rice).